The primary structure comprises 29 residues: Brevinin-2Tc (29 aa).

A disulfide bridge links Cys23 with Cys29.

It belongs to the frog skin active peptide (FSAP) family. Brevinin subfamily. Expressed by the skin glands.

It is found in the secreted. In terms of biological role, antibacterial activity against representative Gram-negative and Gram-positive bacteria. In Rana temporaria (European common frog), this protein is Brevinin-2Tc.